Here is a 404-residue protein sequence, read N- to C-terminus: uncharacterized protein (404 aa).

11 consecutive transmembrane segments (helical) span residues 15–35, 43–63, 84–104, 121–141, 154–174, 187–207, 231–251, 279–299, 316–336, 338–358, and 373–393; these read WSLL…PGFL, NTLA…DIFA, MVLP…GLAF, GITP…IFVI, IAGF…APPV, ISIF…ITFA, VVGI…VLGV, IFGL…AYTS, GIII…GQPA, ILVL…GTLL, and PLWL…MGIY.

The protein belongs to the NRAMP family.

The protein localises to the cell membrane. This is an uncharacterized protein from Bacillus subtilis (strain 168).